The chain runs to 187 residues: Ribosome-recycling factor (187 aa).

It belongs to the RRF family.

The protein resides in the cytoplasm. Functionally, responsible for the release of ribosomes from messenger RNA at the termination of protein biosynthesis. May increase the efficiency of translation by recycling ribosomes from one round of translation to another. The polypeptide is Ribosome-recycling factor (Methylorubrum populi (strain ATCC BAA-705 / NCIMB 13946 / BJ001) (Methylobacterium populi)).